The sequence spans 538 residues: DALR anticodon-binding domain-containing protein 3 (538 aa).

In terms of assembly, part of a complex containing tRNA(Arg) and METTL2. Interacts with tRNA(Arg)(CCU) and tRNA(Arg)(UCU). Interacts with METTL2.

In terms of biological role, involved in tRNA methylation. Facilitates the recognition and targeting of tRNA(Arg)(CCU) and tRNA(Arg)(UCU) substrates for N(3)-methylcytidine modification by METTL2. This Rattus norvegicus (Rat) protein is DALR anticodon-binding domain-containing protein 3 (Dalrd3).